Here is a 422-residue protein sequence, read N- to C-terminus: Histidinol dehydrogenase (422 aa).

Tyr123, Gln183, and Asn206 together coordinate NAD(+). 3 residues coordinate substrate: Ser229, Gln251, and His254. Gln251 and His254 together coordinate Zn(2+). Catalysis depends on proton acceptor residues Glu320 and His321. Positions 321, 354, 408, and 413 each coordinate substrate. Asp354 provides a ligand contact to Zn(2+). His413 is a Zn(2+) binding site.

The protein belongs to the histidinol dehydrogenase family. Zn(2+) is required as a cofactor.

The catalysed reaction is L-histidinol + 2 NAD(+) + H2O = L-histidine + 2 NADH + 3 H(+). It participates in amino-acid biosynthesis; L-histidine biosynthesis; L-histidine from 5-phospho-alpha-D-ribose 1-diphosphate: step 9/9. Its function is as follows. Catalyzes the sequential NAD-dependent oxidations of L-histidinol to L-histidinaldehyde and then to L-histidine. This is Histidinol dehydrogenase from Natronomonas pharaonis (strain ATCC 35678 / DSM 2160 / CIP 103997 / JCM 8858 / NBRC 14720 / NCIMB 2260 / Gabara) (Halobacterium pharaonis).